Here is a 504-residue protein sequence, read N- to C-terminus: Maturase K (504 aa).

Belongs to the intron maturase 2 family. MatK subfamily.

It localises to the plastid. It is found in the chloroplast. Usually encoded in the trnK tRNA gene intron. Probably assists in splicing its own and other chloroplast group II introns. This Kokia drynarioides (Hawaiian tree cotton) protein is Maturase K.